Consider the following 546-residue polypeptide: CTP synthase (546 aa).

The interval 1–266 is amidoligase domain; it reads MTTRYIFVTG…DDLVVKRFGL (266 aa). Residue Ser14 coordinates CTP. Position 14 (Ser14) interacts with UTP. Residues 15 to 20 and Asp72 each bind ATP; that span reads SLGKGI. Asp72 and Glu140 together coordinate Mg(2+). Residues 147-149, 187-192, and Lys223 each bind CTP; these read DIE and KTKPTQ. Residues 187 to 192 and Lys223 contribute to the UTP site; that span reads KTKPTQ. Residue 239–241 coordinates ATP; it reads KDV. A Glutamine amidotransferase type-1 domain is found at 291-542; that stretch reads VIGMVGKYIE…VAAASAHQKR (252 aa). Residue Gly352 participates in L-glutamine binding. Residue Cys379 is the Nucleophile; for glutamine hydrolysis of the active site. Residues 380-383, Glu403, and Arg470 contribute to the L-glutamine site; that span reads LGMQ. Active-site residues include His515 and Glu517.

The protein belongs to the CTP synthase family. As to quaternary structure, homotetramer.

The enzyme catalyses UTP + L-glutamine + ATP + H2O = CTP + L-glutamate + ADP + phosphate + 2 H(+). The catalysed reaction is L-glutamine + H2O = L-glutamate + NH4(+). It carries out the reaction UTP + NH4(+) + ATP = CTP + ADP + phosphate + 2 H(+). Its pathway is pyrimidine metabolism; CTP biosynthesis via de novo pathway; CTP from UDP: step 2/2. Its activity is regulated as follows. Allosterically activated by GTP, when glutamine is the substrate; GTP has no effect on the reaction when ammonia is the substrate. The allosteric effector GTP functions by stabilizing the protein conformation that binds the tetrahedral intermediate(s) formed during glutamine hydrolysis. Inhibited by the product CTP, via allosteric rather than competitive inhibition. Functionally, catalyzes the ATP-dependent amination of UTP to CTP with either L-glutamine or ammonia as the source of nitrogen. Regulates intracellular CTP levels through interactions with the four ribonucleotide triphosphates. The sequence is that of CTP synthase from Shewanella sp. (strain ANA-3).